The following is a 589-amino-acid chain: MRSMKAIIEYLLKQALINLQQSGEMPIDLEVEIKVENAKDPSHGDYATNLALVLAKPCRQAPKVLAERLVAVIPADPSVEKIEIAGAGFINFFMRSTARSLIISEILNKGKEFGRGNLGQSQKVLIEFVSANPTGPLHVGHGRGAAFGATLGNVLKAAGYDVTLEYYVNDAGRQMNILAVSVWLRYLELAGEPIVFPTNGYKGQYVYEIAQEMWSEQGNQFVHPWISVVENLPADEPEGGDKETYIDAIIARAQSLLGKDGFANFHQHALKTVLDDIKDDLQAFGVRFDSWFSEQSLFEDGSIEKGIQALKDRGHTYEREGALWFRATDFGDEKDRVLVRANGQTTYFASDVAYHWNKYDRGFDRVIDIFGADHHGYVTRIKTAVKALGHDESALDVILVQFAILYRGGDRVQMSTRSGSFVTLRELREEVGNDAARYFYVARKPEQHMDFDLDLAKSESSDNPVYYIQYAHARICSVLRQLKERGLKWDKDMGLKNLDLLEQQHETTLISLIARYPEVIQSAAASCEPHQLAYYLRELANGLHSYYNAIQLLCEQEQLRCARLCLLESVRQVLNNGLAILGVSAPESM.

The 'HIGH' region signature appears at 131-141 (ANPTGPLHVGH).

It belongs to the class-I aminoacyl-tRNA synthetase family. As to quaternary structure, monomer.

The protein localises to the cytoplasm. The enzyme catalyses tRNA(Arg) + L-arginine + ATP = L-arginyl-tRNA(Arg) + AMP + diphosphate. In Legionella pneumophila (strain Paris), this protein is Arginine--tRNA ligase.